Consider the following 325-residue polypeptide: Tetraacyldisaccharide 4'-kinase (325 aa).

An ATP-binding site is contributed by 55–62; the sequence is TAGGNGKT.

Belongs to the LpxK family.

It carries out the reaction a lipid A disaccharide + ATP = a lipid IVA + ADP + H(+). The protein operates within glycolipid biosynthesis; lipid IV(A) biosynthesis; lipid IV(A) from (3R)-3-hydroxytetradecanoyl-[acyl-carrier-protein] and UDP-N-acetyl-alpha-D-glucosamine: step 6/6. Functionally, transfers the gamma-phosphate of ATP to the 4'-position of a tetraacyldisaccharide 1-phosphate intermediate (termed DS-1-P) to form tetraacyldisaccharide 1,4'-bis-phosphate (lipid IVA). The sequence is that of Tetraacyldisaccharide 4'-kinase from Salmonella dublin (strain CT_02021853).